Reading from the N-terminus, the 512-residue chain is Gamma-aminobutyric acid receptor subunit beta-2 (512 aa).

The N-terminal stretch at 1-25 (MWRVRKRGYFGIWSFPLIIAAVCAQ) is a signal peptide. Topologically, residues 26 to 244 (SVNDPSNMSL…SFKLKRNIGY (219 aa)) are extracellular. 2 N-linked (GlcNAc...) asparagine glycosylation sites follow: Asn32 and Asn104. Tyr121 serves as a coordination point for histamine. A disulfide bridge links Cys160 with Cys174. N-linked (GlcNAc...) asparagine glycosylation occurs at Asn173. Residues 180 to 181 (SY) and Thr226 contribute to the histamine site. Tyr181 and Thr226 together coordinate 4-aminobutanoate. The next 3 helical transmembrane spans lie at 245–266 (FILQ…SFWI), 270–292 (ASAA…NTHL), and 304–326 (AIDM…YALV). The Cytoplasmic portion of the chain corresponds to 327 to 489 (NYIFFGRGPQ…DLTDVNAIDR (163 aa)). Phosphotyrosine is present on Tyr441. Residues 490 to 511 (WSRIFFPVVFSFFNIVYWLYYV) traverse the membrane as a helical segment.

This sequence belongs to the ligand-gated ion channel (TC 1.A.9) family. Gamma-aminobutyric acid receptor (TC 1.A.9.5) subfamily. GABRB2 sub-subfamily. Heteropentamer, formed by a combination of alpha (GABRA1-6), beta (GABRB1-3), gamma (GABRG1-3), delta (GABRD), epsilon (GABRE), rho (GABRR1-3), pi (GABRP) and theta (GABRQ) chains, each subunit exhibiting distinct physiological and pharmacological properties. Interacts with UBQLN1. May interact with KIF21B. Identified in a complex of 720 kDa composed of LHFPL4, NLGN2, GABRA1, GABRB2, GABRG2 and GABRB3. Glycosylated.

The protein localises to the postsynaptic cell membrane. Its subcellular location is the cell membrane. It is found in the cytoplasmic vesicle. The enzyme catalyses chloride(in) = chloride(out). Allosterically activated by benzodiazepines and the anesthetic etomidate. Inhibited by the antagonist bicuculline. Potentiated by histamine. In terms of biological role, beta subunit of the heteropentameric ligand-gated chloride channel gated by gamma-aminobutyric acid (GABA), a major inhibitory neurotransmitter in the brain. GABA-gated chloride channels, also named GABA(A) receptors (GABAAR), consist of five subunits arranged around a central pore and contain GABA active binding site(s) located at the alpha and beta subunit interface(s). When activated by GABA, GABAARs selectively allow the flow of chloride anions across the cell membrane down their electrochemical gradient. Chloride influx into the postsynaptic neuron following GABAAR opening decreases the neuron ability to generate a new action potential, thereby reducing nerve transmission. GABAARs containing alpha-1 and beta-2 or -3 subunits exhibit synaptogenic activity; the gamma-2 subunit being necessary but not sufficient to induce rapid synaptic contacts formation. Extrasynaptic beta-2 receptors contribute to the tonic GABAergic inhibition. Beta-containing GABAARs can simultaneously bind GABA and histamine where histamine binds at the interface of two neighboring beta subunits, which may be involved in the regulation of sleep and wakefulness. This Mus musculus (Mouse) protein is Gamma-aminobutyric acid receptor subunit beta-2.